A 342-amino-acid polypeptide reads, in one-letter code: Phosphate acyltransferase (342 aa).

Belongs to the PlsX family. In terms of assembly, homodimer. Probably interacts with PlsY.

It localises to the cytoplasm. The enzyme catalyses a fatty acyl-[ACP] + phosphate = an acyl phosphate + holo-[ACP]. The protein operates within lipid metabolism; phospholipid metabolism. Functionally, catalyzes the reversible formation of acyl-phosphate (acyl-PO(4)) from acyl-[acyl-carrier-protein] (acyl-ACP). This enzyme utilizes acyl-ACP as fatty acyl donor, but not acyl-CoA. This chain is Phosphate acyltransferase, found in Shewanella woodyi (strain ATCC 51908 / MS32).